Reading from the N-terminus, the 124-residue chain is Small ribosomal subunit protein uS12c (124 aa).

Disordered regions lie at residues 1–28 and 104–124; these read MPTI…QSCP and AAGV…KPKS. Composition is skewed to basic residues over residues 11-20 and 109-124; these read ERRKIHKKTK and DRRK…KPKS.

This sequence belongs to the universal ribosomal protein uS12 family. Part of the 30S ribosomal subunit.

The protein localises to the plastid. It is found in the chloroplast. Functionally, with S4 and S5 plays an important role in translational accuracy. Located at the interface of the 30S and 50S subunits. In Pyropia yezoensis (Susabi-nori), this protein is Small ribosomal subunit protein uS12c (rps12).